We begin with the raw amino-acid sequence, 151 residues long: Small ribosomal subunit protein uS11 (151 aa).

Residues 131 to 151 (DVTPVPSDSTRRKGGRRGRRL) form a disordered region. The span at 142-151 (RKGGRRGRRL) shows a compositional bias: basic residues.

The protein belongs to the universal ribosomal protein uS11 family.

This is Small ribosomal subunit protein uS11 from Bombyx mori (Silk moth).